We begin with the raw amino-acid sequence, 609 residues long: Glutamine--fructose-6-phosphate aminotransferase [isomerizing] (609 aa).

The Nucleophile; for GATase activity role is filled by Cys-2. One can recognise a Glutamine amidotransferase type-2 domain in the interval 2–217 (CGIVGYIGRR…EGWLAELTPE (216 aa)). 2 consecutive SIS domains span residues 286–425 (SAAE…QNGR) and 458–599 (AAEA…VDKP). The active-site For Fru-6P isomerization activity is Lys-604.

Homodimer.

It is found in the cytoplasm. It catalyses the reaction D-fructose 6-phosphate + L-glutamine = D-glucosamine 6-phosphate + L-glutamate. Functionally, catalyzes the first step in hexosamine metabolism, converting fructose-6P into glucosamine-6P using glutamine as a nitrogen source. This Symbiobacterium thermophilum (strain DSM 24528 / JCM 14929 / IAM 14863 / T) protein is Glutamine--fructose-6-phosphate aminotransferase [isomerizing].